A 465-amino-acid polypeptide reads, in one-letter code: Fumarate hydratase class II (465 aa).

Substrate-binding positions include 100–102 (SGT), 131–134 (HPND), 141–143 (SSN), and threonine 189. Histidine 190 serves as the catalytic Proton donor/acceptor. Serine 320 is an active-site residue. Substrate is bound by residues serine 321 and 326 to 328 (KVN).

Belongs to the class-II fumarase/aspartase family. Fumarase subfamily. Homotetramer.

It is found in the cytoplasm. The catalysed reaction is (S)-malate = fumarate + H2O. It participates in carbohydrate metabolism; tricarboxylic acid cycle; (S)-malate from fumarate: step 1/1. In terms of biological role, involved in the TCA cycle. Catalyzes the stereospecific interconversion of fumarate to L-malate. In Mesorhizobium japonicum (strain LMG 29417 / CECT 9101 / MAFF 303099) (Mesorhizobium loti (strain MAFF 303099)), this protein is Fumarate hydratase class II.